Here is a 406-residue protein sequence, read N- to C-terminus: Argininosuccinate synthase (406 aa).

A8–S16 serves as a coordination point for ATP. Y86 is an L-citrulline binding site. G116 contributes to the ATP binding site. The L-aspartate site is built by T118, N122, and D123. Residue N122 participates in L-citrulline binding. Residues R126, S174, E259, and Y271 each coordinate L-citrulline.

This sequence belongs to the argininosuccinate synthase family. Type 1 subfamily. As to quaternary structure, homotetramer.

Its subcellular location is the cytoplasm. The enzyme catalyses L-citrulline + L-aspartate + ATP = 2-(N(omega)-L-arginino)succinate + AMP + diphosphate + H(+). The protein operates within amino-acid biosynthesis; L-arginine biosynthesis; L-arginine from L-ornithine and carbamoyl phosphate: step 2/3. The sequence is that of Argininosuccinate synthase from Lacticaseibacillus paracasei (strain ATCC 334 / BCRC 17002 / CCUG 31169 / CIP 107868 / KCTC 3260 / NRRL B-441) (Lactobacillus paracasei).